We begin with the raw amino-acid sequence, 213 residues long: dITP/XTP pyrophosphatase (213 aa).

17–22 (SNNAGK) contributes to the substrate binding site. Mg(2+) is bound by residues Glu49 and Asp78. Asp78 serves as the catalytic Proton acceptor. Residues Ser79, 164–167 (FGYD), Lys187, and 192–193 (HR) contribute to the substrate site.

It belongs to the HAM1 NTPase family. In terms of assembly, homodimer. It depends on Mg(2+) as a cofactor.

The catalysed reaction is XTP + H2O = XMP + diphosphate + H(+). It catalyses the reaction dITP + H2O = dIMP + diphosphate + H(+). The enzyme catalyses ITP + H2O = IMP + diphosphate + H(+). In terms of biological role, pyrophosphatase that catalyzes the hydrolysis of nucleoside triphosphates to their monophosphate derivatives, with a high preference for the non-canonical purine nucleotides XTP (xanthosine triphosphate), dITP (deoxyinosine triphosphate) and ITP. Seems to function as a house-cleaning enzyme that removes non-canonical purine nucleotides from the nucleotide pool, thus preventing their incorporation into DNA/RNA and avoiding chromosomal lesions. This Bordetella bronchiseptica (strain ATCC BAA-588 / NCTC 13252 / RB50) (Alcaligenes bronchisepticus) protein is dITP/XTP pyrophosphatase.